The chain runs to 139 residues: Large ribosomal subunit protein uL16 (139 aa).

Belongs to the universal ribosomal protein uL16 family. Part of the 50S ribosomal subunit.

Binds 23S rRNA and is also seen to make contacts with the A and possibly P site tRNAs. The protein is Large ribosomal subunit protein uL16 of Chlorobium phaeobacteroides (strain BS1).